Consider the following 645-residue polypeptide: Chaperone protein DnaK (645 aa).

Thr201 bears the Phosphothreonine; by autocatalysis mark. Residues 606 to 629 show a composition bias toward low complexity; that stretch reads NTNNATAGDNNTTDTGSSSNSDGS. Positions 606-645 are disordered; that stretch reads NTNNATAGDNNTTDTGSSSNSDGSKVVDSDYQEIDKKDGK. The segment covering 630 to 645 has biased composition (basic and acidic residues); sequence KVVDSDYQEIDKKDGK.

The protein belongs to the heat shock protein 70 family.

Its function is as follows. Acts as a chaperone. In Ehrlichia ruminantium (strain Gardel), this protein is Chaperone protein DnaK.